Here is a 352-residue protein sequence, read N- to C-terminus: Sortase SrtE1 (352 aa).

Composition is skewed to basic and acidic residues over residues M1–S10 and R34–R45. Positions M1–A132 are disordered. Over M1 to A139 the chain is Cytoplasmic. Residues D15–G79 are required for protein stability. Positions G71 to R82 are enriched in gly residues. Basic residues predominate over residues A83–G97. Residues I140–W160 form a helical membrane-spanning segment. Residues W161–S352 are Extracellular-facing. Active-site residues include H251 and C320. The active-site Proton donor is the R329.

It belongs to the bacterial sortase family. Class E subfamily.

The protein localises to the cell membrane. It carries out the reaction The enzyme catalyzes a cell wall sorting reaction in which a surface protein with a sorting signal containing a LPXTG motif is cleaved between the Thr and Gly residue. The resulting threonine carboxyl end of the protein is covalently attached to a pentaglycine cross-bridge of peptidoglycan.. Functionally, transpeptidase that anchors surface proteins to the cell wall. Recognizes both Leu-Ala-x-Thr-Gly and Leu-Pro-x-Thr-Gly, with a preference for the former. Unlike the S.aureus sortase it cleaves not only the Thr-Gly motif but also the Ala-X bond; Ala-Glu and Ala-His bonds are better substrates than the Thr-Gly motif in vitro. Among its possible substrates are the chaplins ChpA, ChpB and ChpC; this enzyme is less important for ChpC attachment than is SrtE2. A double knockout mutant of srtE1 and srtE2 shows a developmental defect in aerial hyphae formation more dramatic than that due to chaplin deletion. In Streptomyces coelicolor (strain ATCC BAA-471 / A3(2) / M145), this protein is Sortase SrtE1.